The following is a 295-amino-acid chain: 4-hydroxybenzoate octaprenyltransferase (295 aa).

8 helical membrane-spanning segments follow: residues 28 to 48, 51 to 71, 101 to 121, 124 to 144, 159 to 179, 220 to 240, 242 to 262, and 274 to 294; these read AGWLLLLWPTLSALWIAAGGF, WHLLAVFTLGTILMRSAGCCV, ALGVGAVLALVSFGLVLTTNA, IAWSLPALAVTIAYPFAKRFV, IPMAFTAVGGAVPMLAAWLVL, VMAFYLAFVALWAWALAPFGL, WPLHAVLAAMLLQVAWHWRLI, and FTGNHWLGFTLFAGIVAGFAL.

The protein belongs to the UbiA prenyltransferase family. Mg(2+) serves as cofactor.

The protein localises to the cell inner membrane. It carries out the reaction all-trans-octaprenyl diphosphate + 4-hydroxybenzoate = 4-hydroxy-3-(all-trans-octaprenyl)benzoate + diphosphate. It functions in the pathway cofactor biosynthesis; ubiquinone biosynthesis. Catalyzes the prenylation of para-hydroxybenzoate (PHB) with an all-trans polyprenyl group. Mediates the second step in the final reaction sequence of ubiquinone-8 (UQ-8) biosynthesis, which is the condensation of the polyisoprenoid side chain with PHB, generating the first membrane-bound Q intermediate 3-octaprenyl-4-hydroxybenzoate. This chain is 4-hydroxybenzoate octaprenyltransferase, found in Paracidovorax citrulli (strain AAC00-1) (Acidovorax citrulli).